Reading from the N-terminus, the 504-residue chain is Maturase K (504 aa).

It belongs to the intron maturase 2 family. MatK subfamily.

The protein localises to the plastid. It is found in the chloroplast. Its function is as follows. Usually encoded in the trnK tRNA gene intron. Probably assists in splicing its own and other chloroplast group II introns. The sequence is that of Maturase K from Bombax buonopozense (Red-flowered silk cotton tree).